The sequence spans 1020 residues: P3N-PIPO polyprotein (1020 aa).

Positions 165-308 constitute a Peptidase S30 domain; the sequence is RMSEASLQLF…KKQSNEIIHY (144 aa). Active-site for P1 proteinase activity residues include histidine 216, aspartate 225, and serine 259. Residues 360–363 carry the Involved in interaction with stylet and aphid transmission motif; that stretch reads KITC. An Involved in virions binding and aphid transmission motif is present at residues 618–620; that stretch reads PTK. Residues 644 to 766 enclose the Peptidase C6 domain; that stretch reads MFIAKAGYCY…DSNMKTYLVG (123 aa). Catalysis depends on for helper component proteinase activity residues cysteine 652 and histidine 725.

It belongs to the potyviridae P3N-PIPO polyprotein family. Interacts (via PIPO domain) with host PCaP1 protein; this interaction may help to anchor the movement complex to the plasma membrane from which the complex could move to the plasmodesmata. In terms of processing, potyviral RNA is expressed as two polyproteins which undergo post-translational proteolytic processing. Genome polyprotein is processed by NIa-pro, P1 and HC-pro proteinases resulting in the production of at least ten individual proteins. P3N-PIPO is cleaved by P1 and HC-pro proteinases resulting in the production of three individual proteins. The P1 proteinase and the HC-pro cleave only their respective C-termini autocatalytically.

The protein localises to the host cell junction. It is found in the host plasmodesma. The enzyme catalyses Hydrolyzes a Gly-|-Gly bond at its own C-terminus, commonly in the sequence -Tyr-Xaa-Val-Gly-|-Gly, in the processing of the potyviral polyprotein.. In terms of biological role, required for aphid transmission and also has proteolytic activity. Only cleaves a Gly-Gly dipeptide at its own C-terminus. Interacts with virions and aphid stylets. Acts as a suppressor of RNA-mediated gene silencing, also known as post-transcriptional gene silencing (PTGS), a mechanism of plant viral defense that limits the accumulation of viral RNAs. May have RNA-binding activity. Allows efficient cell to cell propagation, by bypassing the host cell wall barrier. Transports viral genome to neighboring plant cells directly through plasmosdesmata, without any budding. The sequence is that of P3N-PIPO polyprotein from Plum pox potyvirus (isolate NAT) (PPV).